A 2222-amino-acid polypeptide reads, in one-letter code: DNA polymerase epsilon catalytic subunit A (2222 aa).

Residues 90–110 are disordered; the sequence is ETLSSGSNGGGNSNDGERVTT. Zn(2+)-binding residues include Cys2108, Cys2111, Cys2130, and Cys2133. The segment at 2108-2133 adopts a CysA-type zinc-finger fold; it reads CEYCFFISDIDFCKAAPESIFSCVRC. Cys2164, Cys2167, Cys2179, and Cys2181 together coordinate [4Fe-4S] cluster. Positions 2164–2181 match the CysB motif motif; the sequence is CSRCHKVKRDYMSAHCPC.

Belongs to the DNA polymerase type-B family. As to quaternary structure, DNA polymerase epsilon is a heterotetramer consisting of POL2, DPB2, DPB3 and DPB4. It depends on [4Fe-4S] cluster as a cofactor.

The protein localises to the nucleus. The catalysed reaction is DNA(n) + a 2'-deoxyribonucleoside 5'-triphosphate = DNA(n+1) + diphosphate. Functionally, catalytic component of the DNA polymerase epsilon complex which participates in chromosomal DNA replication. Required during synthesis of the leading DNA strands at the replication fork, binds at/or near replication origins and moves along DNA with the replication fork. Has 3'-5' proofreading exonuclease activity that corrects errors arising during DNA replication. This chain is DNA polymerase epsilon catalytic subunit A (POL2), found in Saccharomyces cerevisiae (strain ATCC 204508 / S288c) (Baker's yeast).